A 512-amino-acid polypeptide reads, in one-letter code: Apolipoprotein N-acyltransferase (512 aa).

The next 6 membrane-spanning stretches (helical) occupy residues 5–25 (LDKYWQHPALYWPLLILFAAA), 56–76 (FAVSSAYLFGLTAYTTQFYWI), 92–112 (VPLTFLLPAYLALYPALCFWL), 118–138 (LPRGIKIGLVLPILWTLTEFA), 168–188 (FGGIHMVTLATAFLGVWLVLA), and 195–215 (SGKRLLPIILIAALLAAGYTA). The CN hydrolase domain maps to 233–477 (LQGNIDQTLK…ETVLEGHIKG (245 aa)). Catalysis depends on Glu271, which acts as the Proton acceptor. Lys337 is a catalytic residue. The Nucleophile role is filled by Cys389. Residues 487-507 (TGSSWWLMGILTLAALILFIF) form a helical membrane-spanning segment.

This sequence belongs to the CN hydrolase family. Apolipoprotein N-acyltransferase subfamily.

The protein resides in the cell inner membrane. It carries out the reaction N-terminal S-1,2-diacyl-sn-glyceryl-L-cysteinyl-[lipoprotein] + a glycerophospholipid = N-acyl-S-1,2-diacyl-sn-glyceryl-L-cysteinyl-[lipoprotein] + a 2-acyl-sn-glycero-3-phospholipid + H(+). It participates in protein modification; lipoprotein biosynthesis (N-acyl transfer). Catalyzes the phospholipid dependent N-acylation of the N-terminal cysteine of apolipoprotein, the last step in lipoprotein maturation. This Neisseria meningitidis serogroup A / serotype 4A (strain DSM 15465 / Z2491) protein is Apolipoprotein N-acyltransferase.